Here is a 238-residue protein sequence, read N- to C-terminus: Fish-egg lectin (238 aa).

5 consecutive repeat copies span residues 1 to 34, 35 to 68, 69 to 106, 107 to 156, and 157 to 199. The interval 1–199 is 5 X approximate tandem repeats; that stretch reads LDCTVIDGNL…TGVTRSKPDG (199 aa). Cystine bridges form between cysteine 3–cysteine 234, cysteine 100–cysteine 153, cysteine 128–cysteine 133, and cysteine 208–cysteine 226. A glycan (N-linked (GlcNAc...) asparagine) is linked at asparagine 27.

The protein belongs to the tectonin family. As to expression, expressed in the eggs.

Its subcellular location is the secreted. In terms of biological role, lipopolysaccharide-binding protein with a very low agglutinating activity for human A-type erythrocytes and interacts with both Gram-positive and Gram-negative bacteria. The sequence is that of Fish-egg lectin from Cyprinus carpio (Common carp).